The sequence spans 320 residues: ATP-dependent 6-phosphofructokinase (320 aa).

Glycine 11 serves as a coordination point for ATP. Residue 21–25 participates in ADP binding; sequence RAVVR. Residues 72-73 and 102-105 each bind ATP; these read RC and GDGS. Position 103 (aspartate 103) interacts with Mg(2+). 125 to 127 contributes to the substrate binding site; sequence TID. The active-site Proton acceptor is aspartate 127. Arginine 154 provides a ligand contact to ADP. Substrate-binding positions include arginine 162 and 169-171; that span reads MGR. Residues 185–187 and 214–216 each bind ADP; these read GAE and KTH. Residues glutamate 223, arginine 244, and 250–253 contribute to the substrate site; that span reads HIQR.

It belongs to the phosphofructokinase type A (PFKA) family. ATP-dependent PFK group I subfamily. Prokaryotic clade 'B1' sub-subfamily. As to quaternary structure, homotetramer. The cofactor is Mg(2+).

The protein resides in the cytoplasm. The catalysed reaction is beta-D-fructose 6-phosphate + ATP = beta-D-fructose 1,6-bisphosphate + ADP + H(+). It participates in carbohydrate degradation; glycolysis; D-glyceraldehyde 3-phosphate and glycerone phosphate from D-glucose: step 3/4. With respect to regulation, allosterically activated by ADP and other diphosphonucleosides, and allosterically inhibited by phosphoenolpyruvate. In terms of biological role, catalyzes the phosphorylation of D-fructose 6-phosphate to fructose 1,6-bisphosphate by ATP, the first committing step of glycolysis. The sequence is that of ATP-dependent 6-phosphofructokinase from Clostridium botulinum (strain Eklund 17B / Type B).